The chain runs to 323 residues: Aldo-keto reductase family 1 member C4 (323 aa).

NADP(+) is bound by residues Gly20–Tyr24 and Asp50. Tyr55 serves as the catalytic Proton donor. His117 contacts substrate. NADP(+) contacts are provided by residues Ser166 to Asn167, Gln190, His216 to Thr221, and Lys270 to Asn280.

It belongs to the aldo/keto reductase family. As to quaternary structure, monomer.

It is found in the cytoplasm. It localises to the cytosol. It catalyses the reaction chlordecone alcohol + NADP(+) = chlordecone + NADPH + H(+). The catalysed reaction is a 3alpha-hydroxysteroid + NADP(+) = a 3-oxosteroid + NADPH + H(+). It carries out the reaction a 3alpha-hydroxysteroid + NAD(+) = a 3-oxosteroid + NADH + H(+). The enzyme catalyses 5alpha-androstane-3alpha,17beta-diol + NADP(+) = 17beta-hydroxy-5alpha-androstan-3-one + NADPH + H(+). It catalyses the reaction 5alpha-androstane-3beta,17beta-diol + NADP(+) = 17beta-hydroxy-5alpha-androstan-3-one + NADPH + H(+). The catalysed reaction is 5alpha-androstane-3alpha,17beta-diol + NAD(+) = 17beta-hydroxy-5alpha-androstan-3-one + NADH + H(+). It carries out the reaction 17beta-estradiol + NADP(+) = estrone + NADPH + H(+). The enzyme catalyses 17beta-estradiol + NAD(+) = estrone + NADH + H(+). It catalyses the reaction (20S)-hydroxypregn-4-en-3-one + NADP(+) = progesterone + NADPH + H(+). The catalysed reaction is (20S)-hydroxypregn-4-en-3-one + NAD(+) = progesterone + NADH + H(+). It carries out the reaction androsterone + NADP(+) = 5alpha-androstan-3,17-dione + NADPH + H(+). The enzyme catalyses testosterone + NADP(+) = androst-4-ene-3,17-dione + NADPH + H(+). It catalyses the reaction testosterone + NAD(+) = androst-4-ene-3,17-dione + NADH + H(+). The catalysed reaction is 3alpha-hydroxy-5alpha-androstane 17-O-(beta-D-glucuronate) + NADP(+) = 5alpha-dihydrotestosterone 17-O-(beta-D-glucuronate) + NADPH + H(+). It carries out the reaction (3beta,5alpha,17beta)-3-hydroxy-androstan-17-yl sulfate + NADP(+) = 5alpha-dihydrotestosterone sulfate + NADPH + H(+). The enzyme catalyses 5alpha-androstane-3alpha,17beta-diol + NAD(+) = androsterone + NADH + H(+). The protein operates within steroid metabolism. Its function is as follows. Cytosolic aldo-keto reductase that catalyzes the NADH and NADPH-dependent reduction of ketosteroids to hydroxysteroids. Liver specific enzyme that acts as an NAD(P)(H)-dependent 3-, 17- and 20-ketosteroid reductase on the steroid nucleus and side chain. Displays the ability to catalyze both oxidation and reduction in vitro, but most probably acts as a reductase in vivo since the oxidase activity measured in vitro is inhibited by physiological concentration of NADPH. Acts preferentially as a 3-alpha-hydroxysteroid dehydrogenase (HSD) with a subsidiary 3-beta-HSD activity. Catalyzes efficiently the transformation of the potent androgen 5-alpha-dihydrotestosterone (5alpha-DHT or 17beta-hydroxy-5alpha-androstan-3-one) into the less active form, 5-alpha-androstan-3-alpha,17-beta-diol (3-alpha-diol). Catalyzes the reduction of estrone into 17beta-estradiol but with low efficiency. Metabolizes a broad spectrum of natural and synthetic therapeutic steroid and plays an important role in metabolism of androgens, estrogens, progestereone and conjugated steroids. Catalyzes the biotransformation of the pesticide chlordecone (kepone) to its corresponding alcohol leading to increased biliary excretion of the pesticide and concomitant reduction of its neurotoxicity since bile is the major excretory route. This chain is Aldo-keto reductase family 1 member C4 (AKR1C4), found in Macaca fascicularis (Crab-eating macaque).